The chain runs to 453 residues: Trypanin (453 aa).

Positions 1 to 10 are enriched in basic and acidic residues; sequence MPPRTAAERG. The tract at residues 1-22 is disordered; sequence MPPRTAAERGGRRKSVKAPPPV. Coiled coils occupy residues 60 to 156 and 185 to 377; these read TITK…EMNV and SCEA…LVEE.

It belongs to the DRC4 family.

It localises to the cytoplasm. Its subcellular location is the cytoskeleton. It is found in the cell projection. The protein resides in the cilium. The protein localises to the flagellum. In terms of biological role, cytoskeletal linker that plays a central role in the flagellum cell motility. Required for directional cell motility. Plays a role as part of a dynein regulatory system that regulates flagellar beat in response to signals from the central pair apparatus and radial spokes in procyclic cells. Also plays an essential role in the bloodstream form of the trypanosomes as its silencing is lethal for the circulating form. The sequence is that of Trypanin from Trypanosoma brucei rhodesiense.